A 162-amino-acid chain; its full sequence is Peptide methionine sulfoxide reductase MsrA (162 aa).

Residue cysteine 16 is part of the active site.

This sequence belongs to the MsrA Met sulfoxide reductase family.

It catalyses the reaction L-methionyl-[protein] + [thioredoxin]-disulfide + H2O = L-methionyl-(S)-S-oxide-[protein] + [thioredoxin]-dithiol. It carries out the reaction [thioredoxin]-disulfide + L-methionine + H2O = L-methionine (S)-S-oxide + [thioredoxin]-dithiol. Functionally, has an important function as a repair enzyme for proteins that have been inactivated by oxidation. Catalyzes the reversible oxidation-reduction of methionine sulfoxide in proteins to methionine. The protein is Peptide methionine sulfoxide reductase MsrA of Geobacter sulfurreducens (strain ATCC 51573 / DSM 12127 / PCA).